Consider the following 246-residue polypeptide: Breast cancer metastasis-suppressor 1 (246 aa).

The tract at residues 1 to 57 (MPVQPPSKDTEEMEAEGDSAAEMNGEEEESEEERSGSQTESEEESSEMDDEDYERRR) is disordered. Composition is skewed to acidic residues over residues 11 to 32 (EEME…ESEE) and 40 to 52 (ESEE…DDED). The stretch at 51–98 (EDYERRRSECVSEMLDLEKQFSELKEKLFRERLSQLRLRLEEVGAERA) forms a coiled coil. Glycyl lysine isopeptide (Lys-Gly) (interchain with G-Cter in SUMO2) cross-links involve residues Lys-184 and Lys-242.

This sequence belongs to the BRMS1 family. Homohexamer (Potential). Interacts with SNX6, HDAC1 and RELA. Interacts with ARID4A. Identified in mSin3A corepressor complexes together with SIN3A, SIN3B, RBBP4, RBBP7, SAP30, SUDS3, ARID4A, HDAC1 and HDAC2. Interacts with SPOP; this recruits the protein to a ubiquitin ligase complex containing SPOP and CUL3. Post-translationally, ubiquitinated by a cullin-RING-based BCR (BTB-CUL3-RBX1) E3 ubiquitin-protein ligase complex containing SPOP, leading to proteasomal degradation. As to expression, expression levels are higher in term placentas than in early placentas. Low levels of expression observed in normal pregnancies and in molar pregnancies.

The protein resides in the nucleus. Its subcellular location is the cytoplasm. Its function is as follows. Transcriptional repressor. Down-regulates transcription activation by NF-kappa-B by promoting the deacetylation of RELA at 'Lys-310'. Promotes HDAC1 binding to promoter regions. Down-regulates expression of anti-apoptotic genes that are controlled by NF-kappa-B. Promotes apoptosis in cells that have inadequate adherence to a substrate, a process called anoikis, and may thereby inhibit metastasis. May be a mediator of metastasis suppression in breast carcinoma. The polypeptide is Breast cancer metastasis-suppressor 1 (BRMS1) (Homo sapiens (Human)).